The chain runs to 425 residues: Serine--tRNA ligase (425 aa).

229 to 231 (TSE) contributes to the L-serine binding site. ATP-binding positions include 259 to 261 (RKE) and valine 275. Residue glutamate 282 participates in L-serine binding. 349–352 (EVTS) is a binding site for ATP. An L-serine-binding site is contributed by threonine 384.

It belongs to the class-II aminoacyl-tRNA synthetase family. Type-1 seryl-tRNA synthetase subfamily. Homodimer. The tRNA molecule binds across the dimer.

It localises to the cytoplasm. The catalysed reaction is tRNA(Ser) + L-serine + ATP = L-seryl-tRNA(Ser) + AMP + diphosphate + H(+). It catalyses the reaction tRNA(Sec) + L-serine + ATP = L-seryl-tRNA(Sec) + AMP + diphosphate + H(+). It participates in aminoacyl-tRNA biosynthesis; selenocysteinyl-tRNA(Sec) biosynthesis; L-seryl-tRNA(Sec) from L-serine and tRNA(Sec): step 1/1. Catalyzes the attachment of serine to tRNA(Ser). Is also able to aminoacylate tRNA(Sec) with serine, to form the misacylated tRNA L-seryl-tRNA(Sec), which will be further converted into selenocysteinyl-tRNA(Sec). This Borrelia garinii subsp. bavariensis (strain ATCC BAA-2496 / DSM 23469 / PBi) (Borreliella bavariensis) protein is Serine--tRNA ligase.